The primary structure comprises 64 residues: Large ribosomal subunit protein bL35 (64 aa).

Residues 1–14 show a composition bias toward basic residues; that stretch reads MKQKTHKGTAKRIK. Residues 1-48 are disordered; it reads MKQKTHKGTAKRIKVTGSGKLRREQANRRHLLEGKPSKRTRRLKGTED. A compositionally biased stretch (basic and acidic residues) spans 21–36; sequence LRREQANRRHLLEGKP.

Belongs to the bacterial ribosomal protein bL35 family.

In Corynebacterium aurimucosum (strain ATCC 700975 / DSM 44827 / CIP 107346 / CN-1) (Corynebacterium nigricans), this protein is Large ribosomal subunit protein bL35.